A 227-amino-acid chain; its full sequence is tRNA (guanine-N(7)-)-methyltransferase (227 aa).

4 residues coordinate S-adenosyl-L-methionine: glutamate 57, glutamate 82, aspartate 109, and aspartate 132. The active site involves aspartate 132. Substrate contacts are provided by residues lysine 136, aspartate 168, and 205 to 208 (TKFE).

This sequence belongs to the class I-like SAM-binding methyltransferase superfamily. TrmB family.

It catalyses the reaction guanosine(46) in tRNA + S-adenosyl-L-methionine = N(7)-methylguanosine(46) in tRNA + S-adenosyl-L-homocysteine. Its pathway is tRNA modification; N(7)-methylguanine-tRNA biosynthesis. In terms of biological role, catalyzes the formation of N(7)-methylguanine at position 46 (m7G46) in tRNA. This chain is tRNA (guanine-N(7)-)-methyltransferase, found in Leifsonia xyli subsp. xyli (strain CTCB07).